A 244-amino-acid polypeptide reads, in one-letter code: Type III pantothenate kinase (244 aa).

ATP is bound at residue 7–14 (DIGNTRLK). Substrate contacts are provided by residues Y95 and 102–105 (GIDR). The active-site Proton acceptor is the D104. Residue T126 coordinates ATP. T177 is a binding site for substrate.

Belongs to the type III pantothenate kinase family. Homodimer. It depends on NH4(+) as a cofactor. K(+) serves as cofactor.

The protein localises to the cytoplasm. The enzyme catalyses (R)-pantothenate + ATP = (R)-4'-phosphopantothenate + ADP + H(+). Its pathway is cofactor biosynthesis; coenzyme A biosynthesis; CoA from (R)-pantothenate: step 1/5. In terms of biological role, catalyzes the phosphorylation of pantothenate (Pan), the first step in CoA biosynthesis. The chain is Type III pantothenate kinase from Acinetobacter baumannii (strain ACICU).